Here is a 315-residue protein sequence, read N- to C-terminus: Mitochondrial glutamate carrier 2 (315 aa).

Solcar repeat units follow at residues 6-92, 100-210, and 219-308; these read LSIT…FRRL, RNLK…LNNL, and ASFA…GIGE. Helical transmembrane passes span 12 to 32, 61 to 81, and 106 to 126; these read LINGGVAGLVGVTCVFPIDLA, FFGMYRGAAVNLTLVTPEKAI, and MLAGCGAGMCQVVVTCPMEML. Residues 141 to 160 are disordered; the sequence is QGSASAPSTSRSYTTGSAST. Residues 142 to 159 show a composition bias toward polar residues; that stretch reads GSASAPSTSRSYTTGSAS. Phosphoserine is present on Ser145. Helical transmembrane passes span 185–205, 225–245, and 288–308; these read GLGATLLRDIPFSIIYFPLFA, FVSGCVAGSIAAVAVTPLDVL, and ALVIAPLFGIAQGVYFIGIGE.

This sequence belongs to the mitochondrial carrier (TC 2.A.29) family. As to expression, expressed in brain, to a lesser extent in testis, and poorly in all the other tissues.

Its subcellular location is the mitochondrion inner membrane. The catalysed reaction is L-glutamate(in) + H(+)(in) = L-glutamate(out) + H(+)(out). Responsible for the transport of glutamate from the cytosol into the mitochondrial matrix with the concomitant import of a proton (symport system). This chain is Mitochondrial glutamate carrier 2, found in Homo sapiens (Human).